The following is a 315-amino-acid chain: Type II methyltransferase M.Bsp6I (315 aa).

Residues 2–315 (LQIASLFAGV…IAENIYKSML (314 aa)) enclose the SAM-dependent MTase C5-type domain. Cys73 is a catalytic residue.

This sequence belongs to the class I-like SAM-binding methyltransferase superfamily. C5-methyltransferase family.

It carries out the reaction a 2'-deoxycytidine in DNA + S-adenosyl-L-methionine = a 5-methyl-2'-deoxycytidine in DNA + S-adenosyl-L-homocysteine + H(+). Functionally, a methylase that recognizes the double-stranded sequence 5'-GCNGC-3', methylates C-? on both strands, and protects the DNA from cleavage by the Bsp6I endonuclease. The sequence is that of Type II methyltransferase M.Bsp6I from Bacillus sp. (strain RFL6).